A 1368-amino-acid polypeptide reads, in one-letter code: Kinesin-like protein KIF24 (1368 aa).

Residues 1 to 64 (MASWLYECLC…FQLIKIIKIM (64 aa)) form the SAM domain. The tract at residues 89–112 (ELRSGPRRQLNFDSPADNKDRNAS) is disordered. Residues Ser102 and Ser112 each carry the phosphoserine modification. A Kinesin motor domain is found at 223–546 (KIRVCVRKRP…LRYADRVKEL (324 aa)). 313-320 (GQTGAGKT) contacts ATP. The residue at position 478 (Ser478) is a Phosphoserine. The interval 478-709 (SLLALKECIR…STKCKKVQTV (232 aa)) is interaction with MPHOSPH9. The segment covering 557-576 (TSRNRTSGNSSPKRIQSSPG) has biased composition (polar residues). 2 disordered regions span residues 557 to 584 (TSRN…DKCS) and 602 to 639 (GSTR…SPSQ). At Ser584 the chain carries Phosphoserine. Thr621 carries the phosphothreonine; by NEK2 modification. Ser622 is subject to Phosphoserine; by NEK2. Ser646 carries the post-translational modification Phosphoserine. Disordered regions lie at residues 651-670 (TVRS…PLCS), 729-753 (HRAE…WTNI), 792-849 (QYRP…NTLE), 864-938 (GPEK…LAEK), and 952-984 (RGGG…EEDG). Residues 819-830 (QVEELDDSDFSE) are compositionally biased toward acidic residues. Phosphoserine is present on residues Ser826 and Ser829. Polar residues-rich tracts occupy residues 839–849 (QRATKQRNTLE) and 871–881 (ERQQSLFSSPR). Residues 882–906 (TGDKKDLTKSWVDSRDPINHRRAAL) show a composition bias toward basic and acidic residues. Ser1012 bears the Phosphoserine mark. Disordered regions lie at residues 1054–1073 (MSLL…QLVQ) and 1086–1148 (GGPV…SREA). Residues 1106-1119 (SSATRHLWLSSSPP) show a composition bias toward polar residues. Over residues 1138 to 1148 (HPADKLPSREA) the composition is skewed to basic and acidic residues.

The protein belongs to the TRAFAC class myosin-kinesin ATPase superfamily. Kinesin family. In terms of assembly, interacts with CCP110, CEP97, TALPID3. Interacts with MPHOSPH9.

Its subcellular location is the cytoplasm. It localises to the cytoskeleton. The protein localises to the microtubule organizing center. The protein resides in the centrosome. It is found in the centriole. Functionally, microtubule-dependent motor protein that acts as a negative regulator of ciliogenesis by mediating recruitment of CCP110 to mother centriole in cycling cells, leading to restrict nucleation of cilia at centrioles. Mediates depolymerization of microtubules of centriolar origin, possibly to suppress aberrant cilia formation. Following activation by NEK2 involved in disassembly of primary cilium during G2/M phase but does not disassemble fully formed ciliary axonemes. As cilium assembly and disassembly is proposed to coexist in a dynamic equilibrium may suppress nascent cilium assembly and, potentially, ciliar re-assembly in cells that have already disassembled their cilia ensuring the completion of cilium removal in the later stages of the cell cycle. Plays an important role in recruiting MPHOSPH9, a negative regulator of cilia formation to the distal end of mother centriole. The sequence is that of Kinesin-like protein KIF24 (KIF24) from Homo sapiens (Human).